The primary structure comprises 164 residues: uncharacterized protein (164 aa).

The segment covering 1–17 (MNSRVPATQSWFSSHLP) has biased composition (polar residues). The interval 1–48 (MNSRVPATQSWFSSHLPTTEPDLEPATAAEGSTTETATLSPETTSFND) is disordered. Residues 24–45 (EPATAAEGSTTETATLSPETTS) show a composition bias toward low complexity. A helical membrane pass occupies residues 64 to 84 (MLLSFGIITVIGLAVAMVLYI). Residues 106-130 (TEEQDELEQELLEHGRDAASMQAAA) are a coiled coil.

Its subcellular location is the membrane. This is an uncharacterized protein from Mus musculus (Mouse).